The sequence spans 176 residues: MSLNNVPAGKSLPDDIYVVIEIPANADPIKYEVDKESGAVFVDRFMSAPMFYPCNYGYVNHTLSLDGDPVDVLVPTPYPLIPGSVIRCRPVGVLKMTDESGEDAKVVAVPHTKISKEYDHIQDVNDLPALLKAQITHFFERYKELESGKWVKVDGWEDAASARAEILSSYERAQNK.

Positions 30, 44, and 56 each coordinate substrate. Aspartate 66, aspartate 71, and aspartate 103 together coordinate Mg(2+). A substrate-binding site is contributed by tyrosine 142.

Belongs to the PPase family. As to quaternary structure, homohexamer. Mg(2+) is required as a cofactor.

Its subcellular location is the cytoplasm. The catalysed reaction is diphosphate + H2O = 2 phosphate + H(+). In terms of biological role, catalyzes the hydrolysis of inorganic pyrophosphate (PPi) forming two phosphate ions. In Vibrio cholerae serotype O1 (strain ATCC 39315 / El Tor Inaba N16961), this protein is Inorganic pyrophosphatase.